The following is a 706-amino-acid chain: Glycine--tRNA ligase beta subunit (706 aa).

It belongs to the class-II aminoacyl-tRNA synthetase family. Tetramer of two alpha and two beta subunits.

It localises to the cytoplasm. It catalyses the reaction tRNA(Gly) + glycine + ATP = glycyl-tRNA(Gly) + AMP + diphosphate. In Hyphomonas neptunium (strain ATCC 15444), this protein is Glycine--tRNA ligase beta subunit.